A 394-amino-acid chain; its full sequence is Putative 8-amino-7-oxononanoate synthase (394 aa).

A substrate-binding site is contributed by R30. Pyridoxal 5'-phosphate is bound at residue 117–118; sequence GY. H142 contacts substrate. Pyridoxal 5'-phosphate contacts are provided by residues S190, 215–218, and 246–249; these read DEAH and TLSK. N6-(pyridoxal phosphate)lysine is present on K249. T364 is a binding site for substrate.

Belongs to the class-II pyridoxal-phosphate-dependent aminotransferase family. BioF subfamily. As to quaternary structure, homodimer. It depends on pyridoxal 5'-phosphate as a cofactor.

It catalyses the reaction 6-carboxyhexanoyl-[ACP] + L-alanine + H(+) = (8S)-8-amino-7-oxononanoate + holo-[ACP] + CO2. It participates in cofactor biosynthesis; biotin biosynthesis. Its function is as follows. Catalyzes the decarboxylative condensation of pimeloyl-[acyl-carrier protein] and L-alanine to produce 8-amino-7-oxononanoate (AON), [acyl-carrier protein], and carbon dioxide. This Nostoc punctiforme (strain ATCC 29133 / PCC 73102) protein is Putative 8-amino-7-oxononanoate synthase (bioF).